Reading from the N-terminus, the 259-residue chain is Sesquipedalian-2 (259 aa).

Residues 17–121 enclose the PH domain; that stretch reads PADHMGFLRT…WVKVLSRASF (105 aa). The stretch at 124–149 forms a coiled coil; it reads MRLVVRELESQLQDARQSLALQRRSS. The F&amp;H motif lies at 223–235; that stretch reads CFSTLHDWYGQEI.

The protein belongs to the sesquipedalian family. Forms homodimers and heterodimers with PHETA1. Interacts with OCRL and INPP5B.

It localises to the early endosome. The protein resides in the recycling endosome. Its subcellular location is the golgi apparatus. It is found in the trans-Golgi network. The protein localises to the cytoplasmic vesicle. It localises to the clathrin-coated vesicle. Functionally, plays a role in endocytic trafficking. Required for receptor recycling from endosomes, both to the trans-Golgi network and the plasma membrane. This chain is Sesquipedalian-2, found in Homo sapiens (Human).